A 1114-amino-acid polypeptide reads, in one-letter code: Constitutive coactivator of PPAR-gamma-like protein 1 (1114 aa).

Positions proline 339 to leucine 402 are interaction with YES1, SRC and FYN. 2 disordered regions span residues glutamine 372–alanine 396 and glutamate 411–isoleucine 519. The span at serine 431–histidine 443 shows a compositional bias: polar residues. The segment covering glycine 477–lysine 498 has biased composition (basic and acidic residues). A compositionally biased stretch (polar residues) spans alanine 499–glutamine 510. Threonine 651 carries the post-translational modification Phosphothreonine. Positions alanine 825–glutamate 1114 are RNA binding. Omega-N-methylarginine is present on residues arginine 869, arginine 880, and arginine 882. The disordered stretch occupies residues phenylalanine 918–glycine 940. The residue at position 928 (lysine 928) is an N6-acetyllysine. The span at serine 929–glycine 940 shows a compositional bias: low complexity. The residue at position 956 (serine 956) is a Phosphoserine. Omega-N-methylarginine is present on residues arginine 978 and arginine 982. Residues alanine 1009–cysteine 1099 form a disordered region. Serine 1019 is subject to Phosphoserine. The span at glutamate 1022 to glutamate 1033 shows a compositional bias: basic and acidic residues. Over residues serine 1034–glycine 1043 the composition is skewed to polar residues. 3 positions are modified to phosphoserine: serine 1040, serine 1041, and serine 1044. The segment covering methionine 1060–serine 1097 has biased composition (polar residues).

Belongs to the constitutive coactivator of PPAR-gamma family. In terms of assembly, interacts with PURA. Interacts with YES1, SRC, FYN. Upon tyrosine phosphorylation, interacts with PIK3R1. In terms of processing, arg-978 is dimethylated, probably to asymmetric dimethylarginine. Post-translationally, phosphorylated on tyrosine by src family kinases upon ultraviolet exposure.

The protein resides in the cytoplasm. It localises to the cell membrane. Component of the oxidative stress-induced survival signaling. May regulate the activation of SRC family protein kinases. May act as a scaffolding protein enabling SRC family protein kinases to phosphorylate and activate PI3-kinase. Binds IGF2 RNA and promotes the production of IGF2 protein. The sequence is that of Constitutive coactivator of PPAR-gamma-like protein 1 (FAM120A) from Bos taurus (Bovine).